Consider the following 454-residue polypeptide: UDP-N-acetylmuramoylalanine--D-glutamate ligase (454 aa).

119-125 (GSNGKTT) is a binding site for ATP.

This sequence belongs to the MurCDEF family.

It is found in the cytoplasm. The enzyme catalyses UDP-N-acetyl-alpha-D-muramoyl-L-alanine + D-glutamate + ATP = UDP-N-acetyl-alpha-D-muramoyl-L-alanyl-D-glutamate + ADP + phosphate + H(+). It participates in cell wall biogenesis; peptidoglycan biosynthesis. Its function is as follows. Cell wall formation. Catalyzes the addition of glutamate to the nucleotide precursor UDP-N-acetylmuramoyl-L-alanine (UMA). The chain is UDP-N-acetylmuramoylalanine--D-glutamate ligase from Latilactobacillus sakei subsp. sakei (strain 23K) (Lactobacillus sakei subsp. sakei).